Consider the following 415-residue polypeptide: Peptide chain release factor subunit 1 (415 aa).

It belongs to the eukaryotic release factor 1 family. In terms of assembly, heterodimer of two subunits, one of which binds GTP.

Its subcellular location is the cytoplasm. Directs the termination of nascent peptide synthesis (translation) in response to the termination codons UAA, UAG and UGA. This chain is Peptide chain release factor subunit 1, found in Methanosarcina mazei (strain ATCC BAA-159 / DSM 3647 / Goe1 / Go1 / JCM 11833 / OCM 88) (Methanosarcina frisia).